The primary structure comprises 654 residues: Probable Xaa-Pro aminopeptidase P (654 aa).

Mn(2+) contacts are provided by Asp449, Asp460, Glu558, and Glu572.

The protein belongs to the peptidase M24B family. Mn(2+) is required as a cofactor.

It carries out the reaction Release of any N-terminal amino acid, including proline, that is linked to proline, even from a dipeptide or tripeptide.. Functionally, catalyzes the removal of a penultimate prolyl residue from the N-termini of peptides. The protein is Probable Xaa-Pro aminopeptidase P (ampp) of Aspergillus flavus (strain ATCC 200026 / FGSC A1120 / IAM 13836 / NRRL 3357 / JCM 12722 / SRRC 167).